The chain runs to 94 residues: Integration host factor subunit beta (94 aa).

It belongs to the bacterial histone-like protein family. As to quaternary structure, heterodimer of an alpha and a beta chain.

Its function is as follows. This protein is one of the two subunits of integration host factor, a specific DNA-binding protein that functions in genetic recombination as well as in transcriptional and translational control. In Brucella anthropi (strain ATCC 49188 / DSM 6882 / CCUG 24695 / JCM 21032 / LMG 3331 / NBRC 15819 / NCTC 12168 / Alc 37) (Ochrobactrum anthropi), this protein is Integration host factor subunit beta.